We begin with the raw amino-acid sequence, 392 residues long: S-adenosylmethionine synthase (392 aa).

An ATP-binding site is contributed by His-15. Residue Asp-17 coordinates Mg(2+). A K(+)-binding site is contributed by Glu-43. Glu-56 and Gln-99 together coordinate L-methionine. The tract at residues Gln-99–Glu-109 is flexible loop. Residues Asp-173–Lys-175, Lys-239–Phe-240, Asp-248, Arg-254–Lys-255, Ala-271, and Lys-275 each bind ATP. Residue Asp-248 participates in L-methionine binding. Residue Lys-279 participates in L-methionine binding.

It belongs to the AdoMet synthase family. As to quaternary structure, homotetramer; dimer of dimers. The cofactor is Mg(2+). K(+) is required as a cofactor.

It localises to the cytoplasm. The enzyme catalyses L-methionine + ATP + H2O = S-adenosyl-L-methionine + phosphate + diphosphate. It participates in amino-acid biosynthesis; S-adenosyl-L-methionine biosynthesis; S-adenosyl-L-methionine from L-methionine: step 1/1. Functionally, catalyzes the formation of S-adenosylmethionine (AdoMet) from methionine and ATP. The overall synthetic reaction is composed of two sequential steps, AdoMet formation and the subsequent tripolyphosphate hydrolysis which occurs prior to release of AdoMet from the enzyme. This Finegoldia magna (strain ATCC 29328 / DSM 20472 / WAL 2508) (Peptostreptococcus magnus) protein is S-adenosylmethionine synthase.